The sequence spans 271 residues: Phosphonates import ATP-binding protein PhnC 2 (271 aa).

An ABC transporter domain is found at 2–245 (LTIDKLTKRF…VARDIYGAGA (244 aa)). Residue 34-41 (GRSGAGKS) participates in ATP binding.

Belongs to the ABC transporter superfamily. Phosphonates importer (TC 3.A.1.9.1) family. The complex is composed of two ATP-binding proteins (PhnC), two transmembrane proteins (PhnE) and a solute-binding protein (PhnD).

It is found in the cell inner membrane. It carries out the reaction phosphonate(out) + ATP + H2O = phosphonate(in) + ADP + phosphate + H(+). In terms of biological role, part of the ABC transporter complex PhnCDE involved in phosphonates import. Responsible for energy coupling to the transport system. This is Phosphonates import ATP-binding protein PhnC 2 from Roseobacter denitrificans (strain ATCC 33942 / OCh 114) (Erythrobacter sp. (strain OCh 114)).